Consider the following 404-residue polypeptide: MQTSEREGCGPEVSPSTVPEATLESLPVPTKLPAFDLFNLVLSYKRLEVYLEPLKDAGDGVRYLLRWQTPLCSLLTCLGLNVLFLTLNEGAWYSVGALMISVPALLGYLQEGCQARLSESELMRRKYHSVRQEDLQRVRLSRPEAVAEVKSFLIQLEALLSRLCGTCEAAYRVLHWENPAVSSQFYGALLGTVCMLYLLPLCWVLALLNSTLFLGNVEFFRVVSEYRASLQRRMNPKQEESAFESPPPSDAGGKGALVDCTPAPTPTEDLTPGSVEEAEEAEPDEEFKDAIEEDDEGAPCPAEDELVLQDNGFLSKNEVLRSKVSRLTERLRKRYPTNNYGSCTGCSATFSVLKKRRNCSNCGNIFCSRCCSFKVPRSSMGATAPEAQRETVFVCASCNQTLSK.

Residues 1-20 (MQTSEREGCGPEVSPSTVPE) form a disordered region. Over 1–66 (MQTSEREGCG…AGDGVRYLLR (66 aa)) the chain is Cytoplasmic. The segment at 1 to 92 (MQTSEREGCG…LFLTLNEGAW (92 aa)) is sufficient for homooligomerization. A sufficient for localization to endoplasmic reticulum tubular network and for interactions with REEP1, REEP5, ATL1, ATL2, ATL3 and SPAST region spans residues 1 to 205 (MQTSEREGCG…LYLLPLCWVL (205 aa)). Residues 51 to 64 (LEPLKDAGDGVRYL) form a necessary for interaction with RAB11A and function in neurite outgrowth region. The chain crosses the membrane as a helical span at residues 67–87 (WQTPLCSLLTCLGLNVLFLTL). A topological domain (lumenal) is located at residue Asn88. The chain crosses the membrane as a helical span at residues 89–109 (EGAWYSVGALMISVPALLGYL). Residues 110-187 (QEGCQARLSE…NPAVSSQFYG (78 aa)) are Cytoplasmic-facing. Positions 188 to 208 (ALLGTVCMLYLLPLCWVLALL) form an intramembrane region, helical. Over 209 to 404 (NSTLFLGNVE…CASCNQTLSK (196 aa)) the chain is Cytoplasmic. The disordered stretch occupies residues 234–286 (MNPKQEESAFESPPPSDAGGKGALVDCTPAPTPTEDLTPGSVEEAEEAEPDEE). Residues 271-354 (TPGSVEEAEE…GCSATFSVLK (84 aa)) are necessary for interaction with KIF5A. Residues 276–286 (EEAEEAEPDEE) are compositionally biased toward acidic residues. The segment at 286–292 (EFKDAIE) is necessary for interaction with VAPA. The FYVE-type zinc finger occupies 337–403 (TNNYGSCTGC…VCASCNQTLS (67 aa)). Zn(2+) contacts are provided by Cys343, Cys346, Cys359, Cys362, Cys367, Cys370, Cys395, and Cys398.

Can form homooligomers (monomers, dimers and tetramers). Interacts with RAB11A (GDP-bound form); regulates RAB11A. Interacts with FKBP8; may negatively regulate ZFYVE27 phosphorylation. Interacts with VAPA (via MSP domain); may regulate ZFYVE27 retention in the endoplasmic reticulum and its function in cell projections formation. Interacts with VAPB (via MSP domain). Interacts with RAB11B (GDP-bound form), REEP1, REEP5, ATL1, ATL2, ATL3, SPAST, SURF4, KIF5A, KIF5B, KIF5C and RTN3. Post-translationally, phosphorylated. Phosphorylation is induced by NGF through the MAPK/ERK pathway and modulates interaction with RAB11A.

Its subcellular location is the recycling endosome membrane. The protein localises to the endoplasmic reticulum membrane. It is found in the cell projection. The protein resides in the growth cone membrane. Its function is as follows. Key regulator of RAB11-dependent vesicular trafficking during neurite extension through polarized membrane transport. Promotes axonal elongation and contributes to the establishment of neuronal cell polarity. Involved in nerve growth factor-induced neurite formation in VAPA-dependent manner. Contributes to both the formation and stabilization of the tubular ER network. Involved in ER morphogenesis by regulating the sheet-to-tubule balance and possibly the density of tubule interconnections. Acts as an adapter protein that facilitates the interaction of KIF5A with VAPA, VAPB, SURF4, RAB11A, RAB11B and RTN3 and the ZFYVE27-KIF5A complex contributes to the transport of these proteins in neurons. Can induce formation of neurite-like membrane protrusions in non-neuronal cells in a KIF5A/B-dependent manner. The chain is Protrudin (ZFYVE27) from Bos taurus (Bovine).